Reading from the N-terminus, the 304-residue chain is HTH-type transcriptional regulator AdmX (304 aa).

The HTH lysR-type domain occupies 1 to 58; that stretch reads MKLRHLEIFYTVMTCGSLSRAAESLNISQPAASKSLKNAELKLGFKLFQRVRGKLLPS. Residues 18–37 constitute a DNA-binding region (H-T-H motif); it reads LSRAAESLNISQPAASKSLK.

This sequence belongs to the LysR transcriptional regulatory family.

It localises to the cytoplasm. With respect to regulation, admX-mediated transcription is inhibited by indole-3-acetic and indole-3-pyruvic acids. AdmX recognizes and binds the auxin indole-3-acetic acid (IAA), which causes conformational changes in AdmX that result in the inhibition of the expression of the andrimid gene cluster and the suppression of antibiotic production. It also recognizes indole-3-pyruvic acid (IPA), an intermediate of the main IAA biosynthetic pathway in plants and plant beneficial bacteria, which also prevents andrimid synthesis, but to a much lesser extent. Positively regulates the biosynthesis of andrimid, a broad-spectrum antibiotic, by activating the expression of the adm biosynthetic gene cluster. It specifically binds to a region within the adm promoter. The sequence is that of HTH-type transcriptional regulator AdmX from Serratia plymuthica.